A 469-amino-acid chain; its full sequence is UDP-N-acetylmuramate--L-alanine ligase (469 aa).

112–118 (GTHGKTT) serves as a coordination point for ATP.

Belongs to the MurCDEF family.

It localises to the cytoplasm. The catalysed reaction is UDP-N-acetyl-alpha-D-muramate + L-alanine + ATP = UDP-N-acetyl-alpha-D-muramoyl-L-alanine + ADP + phosphate + H(+). Its pathway is cell wall biogenesis; peptidoglycan biosynthesis. Cell wall formation. In Leptothrix cholodnii (strain ATCC 51168 / LMG 8142 / SP-6) (Leptothrix discophora (strain SP-6)), this protein is UDP-N-acetylmuramate--L-alanine ligase.